A 395-amino-acid polypeptide reads, in one-letter code: Major outer membrane protein P.IA (395 aa).

The N-terminal stretch at Met-1 to Ala-19 is a signal peptide.

This sequence belongs to the Gram-negative porin family. Homotrimer.

Its subcellular location is the cell outer membrane. Functionally, serves as a slightly cation selective porin. Major antigen on the gonococcal cell surface and it may have pathogenic properties in addition to its porin activity. The chain is Major outer membrane protein P.IA (porA) from Neisseria meningitidis serogroup A / serotype 4A (strain DSM 15465 / Z2491).